The chain runs to 136 residues: Small ribosomal subunit protein uS9 (136 aa).

Positions 111 to 136 (DARRTEPHKPSRSTKGPRAKRQKSYR) are disordered. The span at 120–136 (PSRSTKGPRAKRQKSYR) shows a compositional bias: basic residues.

Belongs to the universal ribosomal protein uS9 family.

The chain is Small ribosomal subunit protein uS9 (rps9) from Methanocaldococcus jannaschii (strain ATCC 43067 / DSM 2661 / JAL-1 / JCM 10045 / NBRC 100440) (Methanococcus jannaschii).